The following is a 156-amino-acid chain: Ribonuclease pancreatic (156 aa).

A signal peptide spans 1–28; the sequence is MALEKSLVLLPLLVLALLVLGWIQPSLG. Lys35 and Arg38 together coordinate substrate. Residue His40 is the Proton acceptor of the active site. 4 disulfide bridges follow: Cys54–Cys112, Cys68–Cys123, Cys86–Cys138, and Cys93–Cys100. N-linked (GlcNAc...) asparagine glycosylation is present at Asn62. 69 to 73 lines the substrate pocket; the sequence is KPVNT. Residue Asn90 is glycosylated (N-linked (GlcNAc...) asparagine). Lys94 contributes to the substrate binding site. A glycan (N-linked (GlcNAc...) asparagine) is linked at Asn104. Arg113 lines the substrate pocket. The active-site Proton donor is the His147.

This sequence belongs to the pancreatic ribonuclease family. In terms of assembly, monomer. Interacts with and forms tight 1:1 complexes with RNH1. Dimerization of two such complexes may occur. Interaction with RNH1 inhibits this protein.

It is found in the secreted. It carries out the reaction an [RNA] containing cytidine + H2O = an [RNA]-3'-cytidine-3'-phosphate + a 5'-hydroxy-ribonucleotide-3'-[RNA].. The enzyme catalyses an [RNA] containing uridine + H2O = an [RNA]-3'-uridine-3'-phosphate + a 5'-hydroxy-ribonucleotide-3'-[RNA].. Its function is as follows. Endonuclease that catalyzes the cleavage of RNA on the 3' side of pyrimidine nucleotides. Acts on single-stranded and double-stranded RNA. This Lemur catta (Ring-tailed lemur) protein is Ribonuclease pancreatic (RNASE1).